A 754-amino-acid polypeptide reads, in one-letter code: 5-methyltetrahydropteroyltriglutamate--homocysteine methyltransferase (754 aa).

Residues 17–20 (RELK) and lysine 110 each bind 5-methyltetrahydropteroyltri-L-glutamate. L-homocysteine-binding positions include 421–423 (IGS) and glutamate 474. Residues 421–423 (IGS) and glutamate 474 contribute to the L-methionine site. Residues 505–506 (RC) and tryptophan 551 each bind 5-methyltetrahydropteroyltri-L-glutamate. Residue aspartate 589 participates in L-homocysteine binding. Residue aspartate 589 coordinates L-methionine. Glutamate 595 is a 5-methyltetrahydropteroyltri-L-glutamate binding site. The Zn(2+) site is built by histidine 631, cysteine 633, and glutamate 655. Histidine 684 acts as the Proton donor in catalysis. Cysteine 716 provides a ligand contact to Zn(2+).

Belongs to the vitamin-B12 independent methionine synthase family. The cofactor is Zn(2+).

It carries out the reaction 5-methyltetrahydropteroyltri-L-glutamate + L-homocysteine = tetrahydropteroyltri-L-glutamate + L-methionine. Its pathway is amino-acid biosynthesis; L-methionine biosynthesis via de novo pathway; L-methionine from L-homocysteine (MetE route): step 1/1. Its function is as follows. Catalyzes the transfer of a methyl group from 5-methyltetrahydrofolate to homocysteine resulting in methionine formation. The polypeptide is 5-methyltetrahydropteroyltriglutamate--homocysteine methyltransferase (Synechococcus sp. (strain JA-2-3B'a(2-13)) (Cyanobacteria bacterium Yellowstone B-Prime)).